Consider the following 208-residue polypeptide: Single-stranded DNA-binding protein DdrA (208 aa).

The protein belongs to the RAD52 family. In terms of assembly, homooligomer composed of 8 to 10 subunits; probably arranged in a ring-structure.

In terms of biological role, ssDNA-binding protein that contributes to the ionizing radiation resistance of D.radiodurans. Plays a role in DNA repair and genome reconstitution, in a RecA-independent process, since DdrA is essential for recovery from severe genomic fragmentation as a result of exposure to severe levels of ionizing radiation in an environment lacking nutrients. In vitro, binds to the 3'-ends of single-stranded DNA, protecting them from nuclease degradation. Thus, DdrA is part of a DNA end-protection system that helps to preserve genome integrity following irradiation or desiccation. Does not display DNA strand annealing activity, unlike eukaryotic Rad52 protein homologs. This Deinococcus radiodurans (strain ATCC 13939 / DSM 20539 / JCM 16871 / CCUG 27074 / LMG 4051 / NBRC 15346 / NCIMB 9279 / VKM B-1422 / R1) protein is Single-stranded DNA-binding protein DdrA (ddrA).